The chain runs to 321 residues: Lipoyl synthase (321 aa).

[4Fe-4S] cluster is bound by residues C68, C73, C79, C94, C98, C101, and S308. In terms of domain architecture, Radical SAM core spans 80 to 297 (FNHGTATFMI…KAEALAMGFT (218 aa)).

It belongs to the radical SAM superfamily. Lipoyl synthase family. [4Fe-4S] cluster serves as cofactor.

The protein resides in the cytoplasm. The catalysed reaction is [[Fe-S] cluster scaffold protein carrying a second [4Fe-4S](2+) cluster] + N(6)-octanoyl-L-lysyl-[protein] + 2 oxidized [2Fe-2S]-[ferredoxin] + 2 S-adenosyl-L-methionine + 4 H(+) = [[Fe-S] cluster scaffold protein] + N(6)-[(R)-dihydrolipoyl]-L-lysyl-[protein] + 4 Fe(3+) + 2 hydrogen sulfide + 2 5'-deoxyadenosine + 2 L-methionine + 2 reduced [2Fe-2S]-[ferredoxin]. It functions in the pathway protein modification; protein lipoylation via endogenous pathway; protein N(6)-(lipoyl)lysine from octanoyl-[acyl-carrier-protein]: step 2/2. Catalyzes the radical-mediated insertion of two sulfur atoms into the C-6 and C-8 positions of the octanoyl moiety bound to the lipoyl domains of lipoate-dependent enzymes, thereby converting the octanoylated domains into lipoylated derivatives. This is Lipoyl synthase from Salmonella paratyphi A (strain AKU_12601).